A 378-amino-acid polypeptide reads, in one-letter code: Squalene methyltransferase 1 (378 aa).

A helical transmembrane segment spans residues 17–37 (LLTWKGVAGLVVAITLGYLII).

The protein belongs to the class I-like SAM-binding methyltransferase superfamily. Erg6/SMT family.

The protein resides in the microsome membrane. It catalyses the reaction squalene + 2 S-adenosyl-L-methionine = 3,22-dimethyl-1,2,23,24-tetradehydro-2,3,22,23-tetrahydrosqualene + 2 S-adenosyl-L-homocysteine + 2 H(+). In terms of biological role, converts squalene to mono- and dimethyl derivatives, but not to tri- and tetramethylated products. Unable to methylate cycloartenol, zymosterol or lanosterol. Methylates both C-3 and C22 positions, but only C-3 position in monomethylated products. Produces mainly dimethylated squalene. The protein is Squalene methyltransferase 1 (TMT-1) of Botryococcus braunii (Green alga).